Here is a 257-residue protein sequence, read N- to C-terminus: METSKPGCGLALDNDKQKPWLGLMIGNSRLHWAYCSGNAPLQTWVTDYNPKSAQLPVLLGKVPLMLASVVPEQTEVWRVYQPKILTLKNLPLVNLYPSFGIDRALAGLGTGLTYGFPCLVVDGGTALTITGFDQDKKLVGGAILPGLGLQLATLGDRLAALPKLEMDQLTELPDRWALDTPSAIFSGVVYGVLGALQSYLQDWQKLFPGAAMVITGGDGKILHGFLKEHSPNLSVAWDDNLIFLGMAAIHHGDRPIC.

24–31 serves as a coordination point for ATP; that stretch reads MIGNSRLH. Residues Tyr-96 and 100 to 103 contribute to the substrate site; that span reads GIDR. The active-site Proton acceptor is Asp-102. Residue Asp-122 participates in K(+) binding. ATP is bound at residue Thr-125. Substrate is bound at residue Thr-180.

This sequence belongs to the type III pantothenate kinase family. In terms of assembly, homodimer. NH4(+) is required as a cofactor. It depends on K(+) as a cofactor.

The protein localises to the cytoplasm. It carries out the reaction (R)-pantothenate + ATP = (R)-4'-phosphopantothenate + ADP + H(+). It participates in cofactor biosynthesis; coenzyme A biosynthesis; CoA from (R)-pantothenate: step 1/5. Functionally, catalyzes the phosphorylation of pantothenate (Pan), the first step in CoA biosynthesis. This chain is Type III pantothenate kinase, found in Synechocystis sp. (strain ATCC 27184 / PCC 6803 / Kazusa).